Consider the following 175-residue polypeptide: 3-hydroxydecanoyl-[acyl-carrier-protein] dehydratase (175 aa).

The active site involves His71.

It belongs to the thioester dehydratase family. FabA subfamily. As to quaternary structure, homodimer.

It localises to the cytoplasm. It carries out the reaction a (3R)-hydroxyacyl-[ACP] = a (2E)-enoyl-[ACP] + H2O. The enzyme catalyses (3R)-hydroxydecanoyl-[ACP] = (2E)-decenoyl-[ACP] + H2O. The catalysed reaction is (2E)-decenoyl-[ACP] = (3Z)-decenoyl-[ACP]. The protein operates within lipid metabolism; fatty acid biosynthesis. Its function is as follows. Necessary for the introduction of cis unsaturation into fatty acids. Catalyzes the dehydration of (3R)-3-hydroxydecanoyl-ACP to E-(2)-decenoyl-ACP and then its isomerization to Z-(3)-decenoyl-ACP. Can catalyze the dehydratase reaction for beta-hydroxyacyl-ACPs with saturated chain lengths up to 16:0, being most active on intermediate chain length. This Rhodopseudomonas palustris (strain BisB5) protein is 3-hydroxydecanoyl-[acyl-carrier-protein] dehydratase.